A 445-amino-acid polypeptide reads, in one-letter code: Probable phosphoglucosamine mutase (445 aa).

Residue Ser99 is the Phosphoserine intermediate of the active site. Positions 99, 238, 240, and 242 each coordinate Mg(2+). Phosphoserine is present on Ser99.

The protein belongs to the phosphohexose mutase family. Mg(2+) serves as cofactor. Post-translationally, activated by phosphorylation.

It carries out the reaction alpha-D-glucosamine 1-phosphate = D-glucosamine 6-phosphate. Its function is as follows. Catalyzes the conversion of glucosamine-6-phosphate to glucosamine-1-phosphate. This is Probable phosphoglucosamine mutase from Methanobrevibacter smithii (strain ATCC 35061 / DSM 861 / OCM 144 / PS).